A 226-amino-acid polypeptide reads, in one-letter code: Myosin regulatory light chain 10 (226 aa).

3 consecutive EF-hand domains span residues 84-119 (NSPASASQAFTIMDQNRDGFIDKEDLRDTFAALGRI), 154-189 (DPEETILHAFKVFDTEGKGFVKADVIKEKLMTQADR), and 190-225 (FSEEEVKQMFAAFPPDVCGNLDYRNLCYVITHGEEK). Ca(2+)-binding residues include D97, N99, D101, and D108.

As to quaternary structure, myosin is a hexamer of 2 heavy chains and 4 light chains.

The chain is Myosin regulatory light chain 10 (MYL10) from Homo sapiens (Human).